A 435-amino-acid polypeptide reads, in one-letter code: MTDNTILIKDALILNPLDFKEIKGSLLIKNDKIAEIGTDIDESNVDKVIDAKGKILLPGFVNTHTHLSMTLFRGLADDLSLDSWLNDNIWPMEANLTSEYCYIGALLGAIELIKSGTTTFSDMYFYMEDVAKAVEESGIRAVLSYGMIDFGDDEKREHEIKENIALFEKCNGMADGRIKVFFGPHSPYTASKDLLEDVRWLANEYNTGIHIHVSETQKEINDSLEAHDLRPFEYLDSIGFLGPDVVAAHSVWLSHNEIEIIKRNNVKISHNPCSNMKLASGIAPIQDLITNDICVGIGTDGASSNNNLDLIEELRTASLLQKVNLLNPKALTSNEALAMGTIKGAEVLGLEQEIGSIEVGKKADLILIDTNNANMVPDSSATSSNIIYSANGYNVDTTICDGKILMENRKLTTLDEEEIYKKARKAIEELKEASK.

Zn(2+)-binding residues include His-64 and His-66. Substrate contacts are provided by Glu-93 and His-185. Residue His-212 coordinates Zn(2+). Substrate-binding residues include Glu-215 and Asp-300. Asp-300 lines the Zn(2+) pocket.

It belongs to the metallo-dependent hydrolases superfamily. MTA/SAH deaminase family. In terms of assembly, homotetramer. Zn(2+) is required as a cofactor.

The catalysed reaction is 5'-deoxyadenosine + H2O + H(+) = 5'-deoxyinosine + NH4(+). The enzyme catalyses S-adenosyl-L-homocysteine + H2O + H(+) = S-inosyl-L-homocysteine + NH4(+). It catalyses the reaction S-methyl-5'-thioadenosine + H2O + H(+) = S-methyl-5'-thioinosine + NH4(+). It carries out the reaction adenosine + H2O + H(+) = inosine + NH4(+). It participates in amino-acid biosynthesis; S-adenosyl-L-methionine biosynthesis. Functionally, catalyzes the deamination of three SAM-derived enzymatic products, namely 5'-deoxyadenosine, S-adenosyl-L-homocysteine, and 5'-methylthioadenosine, to produce the inosine analogs. Can also deaminate adenosine. The preferred substrate for this enzyme is 5'-deoxyadenosine, but all these substrates are efficiently deaminated. Likely functions in a S-adenosyl-L-methionine (SAM) recycling pathway from S-adenosyl-L-homocysteine (SAH) produced from SAM-dependent methylation reactions. May also be involved in the recycling of 5'-deoxyadenosine, whereupon the 5'-deoxyribose moiety of 5'-deoxyinosine is further metabolized to deoxyhexoses used for the biosynthesis of aromatic amino acids in methanogens. This chain is 5'-deoxyadenosine deaminase, found in Methanobrevibacter smithii (strain ATCC 35061 / DSM 861 / OCM 144 / PS).